A 326-amino-acid polypeptide reads, in one-letter code: tRNA U34 carboxymethyltransferase (326 aa).

Carboxy-S-adenosyl-L-methionine is bound by residues K91, W105, K110, G130, M196, Y200, and R315.

The protein belongs to the class I-like SAM-binding methyltransferase superfamily. CmoB family. In terms of assembly, homotetramer.

The catalysed reaction is carboxy-S-adenosyl-L-methionine + 5-hydroxyuridine(34) in tRNA = 5-carboxymethoxyuridine(34) in tRNA + S-adenosyl-L-homocysteine + H(+). Its function is as follows. Catalyzes carboxymethyl transfer from carboxy-S-adenosyl-L-methionine (Cx-SAM) to 5-hydroxyuridine (ho5U) to form 5-carboxymethoxyuridine (cmo5U) at position 34 in tRNAs. This is tRNA U34 carboxymethyltransferase from Tolumonas auensis (strain DSM 9187 / NBRC 110442 / TA 4).